The following is a 302-amino-acid chain: Deoxyhypusine hydroxylase (302 aa).

HEAT-like PBS-type repeat units lie at residues 23–49 (ERFR…AFDD), 54–80 (LKHE…VLKD), 87–113 (VRHE…YKKD), 175–201 (DRYR…GLKD), 206–232 (FRHE…NLED), and 239–265 (VRHE…YADD). Residues His56, Glu57, His89, and Glu90 each coordinate Fe cation. His208, Glu209, His241, and Glu242 together coordinate Fe cation.

It belongs to the deoxyhypusine hydroxylase family. Fe(2+) is required as a cofactor.

The protein localises to the endoplasmic reticulum membrane. The catalysed reaction is [eIF5A protein]-deoxyhypusine + AH2 + O2 = [eIF5A protein]-hypusine + A + H2O. The protein operates within protein modification; eIF5A hypusination. Catalyzes the hydroxylation of the N(6)-(4-aminobutyl)-L-lysine intermediate to form hypusine, an essential post-translational modification only found in mature eIF-5A factor. Essential for organismal viability and plays a role in a wide number of important processes such as cell growth and proliferation, and regulates induction of autophagy and protein synthesis. Has a role in eIF-5A-mediated translational control. This Drosophila pseudoobscura pseudoobscura (Fruit fly) protein is Deoxyhypusine hydroxylase.